Consider the following 289-residue polypeptide: Glucanase inhibitor protein 2 (289 aa).

Residues 1–19 form the signal peptide; that stretch reads MKVTATIAAASMAIAAASA. The Peptidase S1 domain occupies 29-257; sequence ILGGSIIPSG…ALKWVNPIIK (229 aa). A disulfide bridge links cysteine 56 with cysteine 72. Residues asparagine 89, asparagine 104, and asparagine 109 are each glycosylated (N-linked (GlcNAc...) asparagine). Cystine bridges form between cysteine 180-cysteine 192 and cysteine 202-cysteine 233.

The protein belongs to the peptidase S1 family.

It is found in the secreted. Its function is as follows. Secreted effector that suppresses host plant glucan elicitor-mediated defense responses. Targets host endoglucanases and inhibits the endoglucanase-mediated release of elicitor-active glucan oligosaccharides from P.sojae cell walls. The chain is Glucanase inhibitor protein 2 from Phytophthora sojae (Soybean stem and root rot agent).